We begin with the raw amino-acid sequence, 806 residues long: MSFSHREIESKWQKYWEENKTFKTEEDETREKFYALDMFPYPSGAGLHVGHPEGYTATDILSRMKRMQGYNVLHPMGWDAFGLPAEQYAIDTGNSPAEFTEKNINTFRRQIKSLGFSYDWDREVNTTDPDYYKWTQWIFIQLYNKGLAYIDEVAVNWCPALGTVLANEEVIDGKSERGGHPVERRPMKQWMLKITEYADRLLEDLEELDWPESIKDMQRNWIGRSEGAEVTFSVDGHDDTITVFTTRPDTLFGATYMVLAPEHKLVDAITTSEQKQAVESYKKEVATKSDLERTELAKEKTGVFTGAYAINPVNGEKVPIWIADYVLVSYGTGAIMAVPAHDERDYEFAKTFDLPIKEVVSGGVIEQEAYTGDGPHVNSEFLNGLSKEEAIEKMIQWLEAEKKGTKKVTYRLRDWLFSRQRYWGEPIPVIHWEDGTMSTVPEDELPLELPKMSEIKPSGTGESPLANATDWLEVVDPVTGKKGRRETNTMPQWAGSCWYYLRYIDPDNERMIADPEKLKKWLPVDIYIGGAEHAVLHLLYARFWHKVLYDLGVVPTKEPFQKLYNQGMILGENNEKMSKSKGNVVNPDDIIDSHGADTLRLYEMFMGPLDASIAWSTTGLDGARRFLDRVWRLLVDENTEEKSSKIVNGEGSPELKRAYHQTVKKVTEDFEELRFNVGISQLMVYVNEAYKQEELPLDQAEGFVKLLSPVAPHLAEELWSKLGHEGTIAYEPWPTYDEAFLVEDEVEIVVQHNGKVRAKVVVAKDATKEQMEEAALANERVKESIDGKTVRKVIVVPGKLVNIVAN.

Residues 40 to 51 (PYPSGAGLHVGH) carry the 'HIGH' region motif. Positions 576–580 (KMSKS) match the 'KMSKS' region motif. Residue Lys-579 participates in ATP binding.

The protein belongs to the class-I aminoacyl-tRNA synthetase family.

Its subcellular location is the cytoplasm. It carries out the reaction tRNA(Leu) + L-leucine + ATP = L-leucyl-tRNA(Leu) + AMP + diphosphate. The sequence is that of Leucine--tRNA ligase from Halalkalibacterium halodurans (strain ATCC BAA-125 / DSM 18197 / FERM 7344 / JCM 9153 / C-125) (Bacillus halodurans).